The following is a 447-amino-acid chain: Beta-glucuronosyltransferase GlcAT14A (447 aa).

The Cytoplasmic segment spans residues 1–33 (MKKLRSYYSNVRHHQNHHHHHHHHSNIVSSERK). A helical; Signal-anchor for type II membrane protein transmembrane segment spans residues 34-54 (WIFFPLLIGSIFALFLLFLTT). Over 55-447 (TLTSPTGGVR…TENFRSKQCK (393 aa)) the chain is Lumenal. Residues asparagine 151, asparagine 200, asparagine 329, and asparagine 405 are each glycosylated (N-linked (GlcNAc...) asparagine).

The protein belongs to the glycosyltransferase 14 family.

Its subcellular location is the golgi apparatus membrane. Functionally, beta-glucuronosyltransferase involved in the biosynthesis of type II arabinogalactan (AG). Modifies both the beta-1,6-linked galactan and beta-1,3-linked galactan present in type II AG. Transfers glucuronate to beta-1,6-galactooligosaccharides with degrees of polymerization ranging from 3 to 11. Transfers glucuronate to beta-1,3-galactooligosaccharides with degrees of polymerization ranging from 5 to 7. The addition of glucuronate at the O6 position may terminate galactose chain extension. Required for cell elongation during seedling growth. This is Beta-glucuronosyltransferase GlcAT14A from Arabidopsis thaliana (Mouse-ear cress).